Here is a 481-residue protein sequence, read N- to C-terminus: Ribosomal RNA small subunit methyltransferase F (481 aa).

S-adenosyl-L-methionine-binding positions include 125–131 (AAAPGSK), Glu-149, Asp-176, and Asp-194. Cys-247 serves as the catalytic Nucleophile.

Belongs to the class I-like SAM-binding methyltransferase superfamily. RsmB/NOP family.

It is found in the cytoplasm. The catalysed reaction is cytidine(1407) in 16S rRNA + S-adenosyl-L-methionine = 5-methylcytidine(1407) in 16S rRNA + S-adenosyl-L-homocysteine + H(+). Functionally, specifically methylates the cytosine at position 1407 (m5C1407) of 16S rRNA. The sequence is that of Ribosomal RNA small subunit methyltransferase F from Psychromonas ingrahamii (strain DSM 17664 / CCUG 51855 / 37).